The chain runs to 445 residues: Chromosome partition protein MukF (445 aa).

A leucine-zipper region spans residues 213–241; it reads LSETSNTLKELQDTLQAAGDELQTQILDI.

It belongs to the MukF family. As to quaternary structure, interacts, and probably forms a ternary complex, with MukE and MukB via its C-terminal region. The complex formation is stimulated by calcium or magnesium. It is required for an interaction between MukE and MukB.

It localises to the cytoplasm. It is found in the nucleoid. Its function is as follows. Involved in chromosome condensation, segregation and cell cycle progression. May participate in facilitating chromosome segregation by condensation DNA from both sides of a centrally located replisome during cell division. Not required for mini-F plasmid partitioning. Probably acts via its interaction with MukB and MukE. Overexpression results in anucleate cells. It has a calcium binding activity. This Vibrio vulnificus (strain CMCP6) protein is Chromosome partition protein MukF.